A 142-amino-acid chain; its full sequence is Malate dehydrogenase, mitochondrial (142 aa).

NAD(+) contacts are provided by residues 1 to 6 and Asp26; that span reads ASGGIG. The substrate site is built by Arg73 and Arg79. NAD(+) contacts are provided by residues Asn86 and 109–111; that span reads ITN. Asn111 is a substrate binding site.

This sequence belongs to the LDH/MDH superfamily. MDH type 1 family. As to quaternary structure, homodimer.

The protein resides in the mitochondrion matrix. It carries out the reaction (S)-malate + NAD(+) = oxaloacetate + NADH + H(+). The sequence is that of Malate dehydrogenase, mitochondrial from Schistosoma mansoni (Blood fluke).